Consider the following 239-residue polypeptide: 1-(5-phosphoribosyl)-5-[(5-phosphoribosylamino)methylideneamino] imidazole-4-carboxamide isomerase (239 aa).

D8 (proton acceptor) is an active-site residue. D129 acts as the Proton donor in catalysis.

The protein belongs to the HisA/HisF family.

Its subcellular location is the cytoplasm. It catalyses the reaction 1-(5-phospho-beta-D-ribosyl)-5-[(5-phospho-beta-D-ribosylamino)methylideneamino]imidazole-4-carboxamide = 5-[(5-phospho-1-deoxy-D-ribulos-1-ylimino)methylamino]-1-(5-phospho-beta-D-ribosyl)imidazole-4-carboxamide. Its pathway is amino-acid biosynthesis; L-histidine biosynthesis; L-histidine from 5-phospho-alpha-D-ribose 1-diphosphate: step 4/9. The chain is 1-(5-phosphoribosyl)-5-[(5-phosphoribosylamino)methylideneamino] imidazole-4-carboxamide isomerase from Bacillus cereus (strain G9842).